A 264-amino-acid chain; its full sequence is Flagellar brake protein YcgR 1 (264 aa).

The PilZ domain occupies 132–249 (QRREFFRLES…RLAMIERYIA (118 aa)).

Belongs to the YcgR family. In terms of assembly, monomer. Interacts with the flagellar basal bodies.

It localises to the bacterial flagellum basal body. Its function is as follows. Acts as a flagellar brake, regulating swimming and swarming in a bis-(3'-5') cyclic diguanylic acid (c-di-GMP)-dependent manner. Binds 1 c-di-GMP dimer per subunit. Increasing levels of c-di-GMP lead to decreased motility. The sequence is that of Flagellar brake protein YcgR 1 from Dechloromonas aromatica (strain RCB).